The chain runs to 259 residues: Type III pantothenate kinase (259 aa).

6–13 lines the ATP pocket; it reads DIGNTNIT. 113–116 serves as a coordination point for substrate; sequence GADR. Asp-115 serves as the catalytic Proton acceptor. Asp-135 is a binding site for K(+). Residue Thr-138 coordinates ATP. Residue Thr-190 participates in substrate binding.

The protein belongs to the type III pantothenate kinase family. As to quaternary structure, homodimer. It depends on NH4(+) as a cofactor. K(+) is required as a cofactor.

The protein resides in the cytoplasm. It catalyses the reaction (R)-pantothenate + ATP = (R)-4'-phosphopantothenate + ADP + H(+). It participates in cofactor biosynthesis; coenzyme A biosynthesis; CoA from (R)-pantothenate: step 1/5. Its function is as follows. Catalyzes the phosphorylation of pantothenate (Pan), the first step in CoA biosynthesis. This Endomicrobium trichonymphae protein is Type III pantothenate kinase.